The primary structure comprises 727 residues: Bromodomain-containing protein C631.02 (727 aa).

Disordered regions lie at residues 27–231 (AATI…PPMT) and 341–369 (TSYSRPGRRPRSMTAPKGGARTRRQAAMY). Residues 56–68 (ENDDGTLDLFGDS) are compositionally biased toward acidic residues. Residues 69–78 (ELEKEQKGDN) are compositionally biased toward basic and acidic residues. The segment covering 102–114 (PSSPTHPSVSNIT) has biased composition (polar residues). The span at 128–150 (EEEKSSESLDSHTHPPKRVRNED) shows a compositional bias: basic and acidic residues. A compositionally biased stretch (polar residues) spans 153 to 177 (LTFSKTSPVSPSSLKDGASNTVTND). A Phosphoserine modification is found at Ser-162. Residues 206-231 (SKEHSSPHDETVKKEENDKDQYPPMT) show a composition bias toward basic and acidic residues. In terms of domain architecture, Bromo 1 spans 229 to 335 (PMTKEQHKYI…ATFERQLKQL (107 aa)). The Bromo 2 domain maps to 388 to 497 (RKDAAEMKFC…SIFQKLWANK (110 aa)). The NET domain occupies 570–650 (RSLSVDIYPP…KGDEIGAEAL (81 aa)). The tract at residues 699–727 (IAAYNTKSLGSDDSSSEDDGESSESSDSA) is disordered. The segment covering 712-727 (SSSEDDGESSESSDSA) has biased composition (acidic residues).

This sequence belongs to the BET family.

It is found in the nucleus. The sequence is that of Bromodomain-containing protein C631.02 from Schizosaccharomyces pombe (strain 972 / ATCC 24843) (Fission yeast).